We begin with the raw amino-acid sequence, 51 residues long: MSVTQIDLDDEALADVMRIAAVHTKKEAVNLAMRDYVERFRRIEALARSRE.

Antitoxin component of a possible type II toxin-antitoxin (TA) system. The cognate toxin is VapC6. The sequence is that of Putative antitoxin VapB6 (vapB6) from Mycobacterium tuberculosis (strain CDC 1551 / Oshkosh).